A 327-amino-acid polypeptide reads, in one-letter code: 2-oxoglutarate-dependent dioxygenase traH (327 aa).

The Fe2OG dioxygenase domain maps to T183–D290. Positions 211, 213, and 270 each coordinate Fe cation. R280 provides a ligand contact to 2-oxoglutarate.

The protein belongs to the iron/ascorbate-dependent oxidoreductase family. The cofactor is Fe(2+).

Its pathway is secondary metabolite biosynthesis. Its function is as follows. 2-oxoglutarate-dependent dioxygenase; part of the tra gene cluster that produces terrestric acid. The clavatol biosynthesis cluster cla and the terrestric acid cluster tra are both involved in the production of peniphenones and penilactones. The non-reducing PKS claF is responsible for the formation of clavatol from successive condensations of 3 malonyl-CoA units, presumably with a simple acetyl-CoA starter unit, and 2 methylation steps. The esterase claE probably collaborates with claF by catalyzing the hydrolysis of ACP-bound acyl intermediates to free the ACP from stalled intermediates. The clavatol oxidase claD then converts clavatol to hydroxyclavatol. Spontaneous dehydration of hydroxyclavatol leads to the accumulation of the highly active ortho-quinone methide. On the other hand, the PKS-NRPS hybrid traA is involved in the formation of crustosic acid, with the help of traB and traD. The polyketide synthase module (PKS) of traA is responsible for the synthesis of the polyketide backbone via the condensation of an acetyl-CoA starter unit with 3 malonyl-CoA units. The downstream nonribosomal peptide synthetase (NRPS) module then amidates the carboxyl end of the polyketide with L-malic acid. Because traA lacks a designated enoylreductase (ER) domain, the required activity is provided the enoyl reductase traG. Crustosic acid undergoes decarboxylation and isomerization to the terrestric acid, catalyzed by the 2-oxoglutarate-dependent dioxygenase traH. Both acids are further converted to the 2 gamma-butyrolactones (R)-5-methyltetronic acid and (S)-5-carboxylmethyltetronic acid, with involvement of the cytochrome P450 monooxygenase claJ. Spontaneous addition of the methide to these gamma-butyrolactones leads to peniphenone D and penilactone D, which undergo again stereospecific attacking by methide to give penilactones A and B. The polypeptide is 2-oxoglutarate-dependent dioxygenase traH (Penicillium crustosum (Blue mold fungus)).